The chain runs to 306 residues: Dermonecrotic toxin LiSicTox-alphaIA2bi (306 aa).

The signal sequence occupies residues 1–18 (MLPYIALILVCWSVLSQA). Residues 19–26 (AQTDVEGR) constitute a propeptide that is removed on maturation. Residue His38 is part of the active site. Positions 58 and 60 each coordinate Mg(2+). His74 (nucleophile) is an active-site residue. 2 disulfide bridges follow: Cys78–Cys84 and Cys80–Cys223. Position 118 (Asp118) interacts with Mg(2+). N-linked (GlcNAc...) asparagine glycosylation occurs at Asn283.

It belongs to the arthropod phospholipase D family. Class II subfamily. Mg(2+) is required as a cofactor. Expressed by the venom gland.

It is found in the secreted. The catalysed reaction is an N-(acyl)-sphingosylphosphocholine = an N-(acyl)-sphingosyl-1,3-cyclic phosphate + choline. It carries out the reaction an N-(acyl)-sphingosylphosphoethanolamine = an N-(acyl)-sphingosyl-1,3-cyclic phosphate + ethanolamine. It catalyses the reaction a 1-acyl-sn-glycero-3-phosphocholine = a 1-acyl-sn-glycero-2,3-cyclic phosphate + choline. The enzyme catalyses a 1-acyl-sn-glycero-3-phosphoethanolamine = a 1-acyl-sn-glycero-2,3-cyclic phosphate + ethanolamine. In terms of biological role, dermonecrotic toxins cleave the phosphodiester linkage between the phosphate and headgroup of certain phospholipids (sphingolipid and lysolipid substrates), forming an alcohol (often choline) and a cyclic phosphate. This toxin acts on sphingomyelin (SM). It may also act on ceramide phosphoethanolamine (CPE), lysophosphatidylcholine (LPC) and lysophosphatidylethanolamine (LPE), but not on lysophosphatidylserine (LPS), and lysophosphatidylglycerol (LPG). It acts by transphosphatidylation, releasing exclusively cyclic phosphate products as second products. Induces dermonecrosis, hemolysis, increased vascular permeability, edema, inflammatory response, and platelet aggregation. The polypeptide is Dermonecrotic toxin LiSicTox-alphaIA2bi (Loxosceles intermedia (Brown spider)).